The chain runs to 185 residues: Ribosome maturation factor RimP (185 aa).

It belongs to the RimP family.

It is found in the cytoplasm. In terms of biological role, required for maturation of 30S ribosomal subunits. This Magnetococcus marinus (strain ATCC BAA-1437 / JCM 17883 / MC-1) protein is Ribosome maturation factor RimP.